The sequence spans 986 residues: Mediator of RNA polymerase II transcription subunit 24 (986 aa).

6 short sequence motifs (LXXLL motif) span residues 128–132, 341–345, 445–449, 554–558, 785–789, and 855–859; these read LNWLL, LTPLL, LDLLL, LVALL, LPNLL, and LMRLL.

The protein belongs to the Mediator complex subunit 24 family. As to quaternary structure, component of the Mediator complex.

Its subcellular location is the nucleus. Its function is as follows. Component of the Mediator complex, a coactivator involved in the regulated transcription of nearly all RNA polymerase II-dependent genes. Mediator functions as a bridge to convey information from gene-specific regulatory proteins to the basal RNA polymerase II transcription machinery. Mediator is recruited to promoters by direct interactions with regulatory proteins and serves as a scaffold for the assembly of a functional preinitiation complex with RNA polymerase II and the general transcription factors. This Gallus gallus (Chicken) protein is Mediator of RNA polymerase II transcription subunit 24 (MED24).